The primary structure comprises 544 residues: Chaperonin GroEL 1 (544 aa).

Residues 29-32, 86-90, Gly-413, 479-481, and Asp-495 each bind ATP; these read TLGP, DGTTT, and NAA. The interval 525 to 544 is disordered; it reads PEPKDNAPAGAGAGGGDFDY. Over residues 535 to 544 the composition is skewed to gly residues; the sequence is AGAGGGDFDY.

It belongs to the chaperonin (HSP60) family. In terms of assembly, forms a cylinder of 14 subunits composed of two heptameric rings stacked back-to-back. Interacts with the co-chaperonin GroES.

It is found in the cytoplasm. The enzyme catalyses ATP + H2O + a folded polypeptide = ADP + phosphate + an unfolded polypeptide.. Together with its co-chaperonin GroES, plays an essential role in assisting protein folding. The GroEL-GroES system forms a nano-cage that allows encapsulation of the non-native substrate proteins and provides a physical environment optimized to promote and accelerate protein folding. The sequence is that of Chaperonin GroEL 1 from Nostoc sp. (strain PCC 7120 / SAG 25.82 / UTEX 2576).